Reading from the N-terminus, the 826-residue chain is Ribosome-releasing factor 2, mitochondrial (826 aa).

Residues 1-44 constitute a mitochondrion transit peptide; it reads MIVRNLLGKNRLCCLQPKLLLSTLSQRPQLQLSLQLLCRATRLY. In terms of domain architecture, tr-type G spans 53–340; it reads PKTRNIGIIA…GITNYLPSPL (288 aa). GTP contacts are provided by residues 62 to 69, 126 to 130, and 180 to 183; these read AHIDAGKT, DTPGH, and NKMD.

This sequence belongs to the TRAFAC class translation factor GTPase superfamily. Classic translation factor GTPase family. EF-G/EF-2 subfamily.

It is found in the mitochondrion. Mitochondrial GTPase that mediates the disassembly of ribosomes from messenger RNA at the termination of mitochondrial protein biosynthesis. Not involved in the GTP-dependent ribosomal translocation step during translation elongation. The sequence is that of Ribosome-releasing factor 2, mitochondrial from Lodderomyces elongisporus (strain ATCC 11503 / CBS 2605 / JCM 1781 / NBRC 1676 / NRRL YB-4239) (Yeast).